A 334-amino-acid polypeptide reads, in one-letter code: Protein-methionine-sulfoxide reductase catalytic subunit MsrP (334 aa).

The segment at residues 1 to 44 (MKKNQFLKESDVTAESVFFMKRRQVLKALGISAAAFSLPHAAHA) is a signal peptide (tat-type signal). Residues asparagine 88, 91–92 (YE), cysteine 146, threonine 181, asparagine 233, arginine 238, and 249–251 (GIK) each bind Mo-molybdopterin.

It belongs to the MsrP family. In terms of assembly, heterodimer of a catalytic subunit (MsrP) and a heme-binding subunit (MsrQ). Requires Mo-molybdopterin as cofactor. In terms of processing, predicted to be exported by the Tat system. The position of the signal peptide cleavage has not been experimentally proven.

The protein localises to the periplasm. It catalyses the reaction L-methionyl-[protein] + a quinone + H2O = L-methionyl-(S)-S-oxide-[protein] + a quinol. The catalysed reaction is L-methionyl-[protein] + a quinone + H2O = L-methionyl-(R)-S-oxide-[protein] + a quinol. Part of the MsrPQ system that repairs oxidized periplasmic proteins containing methionine sulfoxide residues (Met-O), using respiratory chain electrons. Thus protects these proteins from oxidative-stress damage caused by reactive species of oxygen and chlorine generated by the host defense mechanisms. MsrPQ is essential for the maintenance of envelope integrity under bleach stress, rescuing a wide series of structurally unrelated periplasmic proteins from methionine oxidation, including the primary periplasmic chaperone SurA and the lipoprotein Pal. The catalytic subunit MsrP is non-stereospecific, being able to reduce both (R-) and (S-) diastereoisomers of methionine sulfoxide. This chain is Protein-methionine-sulfoxide reductase catalytic subunit MsrP, found in Escherichia coli O7:K1 (strain IAI39 / ExPEC).